The following is a 587-amino-acid chain: 2-succinyl-5-enolpyruvyl-6-hydroxy-3-cyclohexene-1-carboxylate synthase (587 aa).

This sequence belongs to the TPP enzyme family. MenD subfamily. Homodimer. Mg(2+) serves as cofactor. Mn(2+) is required as a cofactor. Requires thiamine diphosphate as cofactor.

It catalyses the reaction isochorismate + 2-oxoglutarate + H(+) = 5-enolpyruvoyl-6-hydroxy-2-succinyl-cyclohex-3-ene-1-carboxylate + CO2. It participates in quinol/quinone metabolism; 1,4-dihydroxy-2-naphthoate biosynthesis; 1,4-dihydroxy-2-naphthoate from chorismate: step 2/7. The protein operates within cofactor biosynthesis; phylloquinone biosynthesis. Functionally, catalyzes the thiamine diphosphate-dependent decarboxylation of 2-oxoglutarate and the subsequent addition of the resulting succinic semialdehyde-thiamine pyrophosphate anion to isochorismate to yield 2-succinyl-5-enolpyruvyl-6-hydroxy-3-cyclohexene-1-carboxylate (SEPHCHC). The sequence is that of 2-succinyl-5-enolpyruvyl-6-hydroxy-3-cyclohexene-1-carboxylate synthase from Prochlorococcus marinus (strain MIT 9312).